A 39-amino-acid polypeptide reads, in one-letter code: Photosystem I reaction center subunit IX (39 aa).

The helical transmembrane segment at 4 to 24 threads the bilayer; the sequence is FLTTAPVVAAIWFTLTAGILI.

The protein belongs to the PsaJ family.

Its subcellular location is the cellular thylakoid membrane. Its function is as follows. May help in the organization of the PsaE and PsaF subunits. This chain is Photosystem I reaction center subunit IX, found in Synechococcus sp. (strain CC9311).